The sequence spans 1048 residues: Pleckstrin homology domain-containing family A member 6 (1048 aa).

The segment covering 1 to 22 has biased composition (polar residues); it reads MSNKTGGKRPATTNSDIPNHNM. Residues 1 to 36 are disordered; that stretch reads MSNKTGGKRPATTNSDIPNHNMVSEVPPERPSVRAT. In terms of domain architecture, PH spans 59-158; sequence PVTKAGWLFK…WIQAMGEAAR (100 aa). Disordered regions lie at residues 165–318 and 448–467; these read QKSV…MNQL and SLQPRSHSVPRSPSQGSYSR. The segment covering 201-233 has biased composition (basic and acidic residues); the sequence is PEPEAKTRGEGDGRGCEKAERRPERPEVKKEPP. A phosphoserine mark is found at S247 and S251. Residues 267–290 show a composition bias toward polar residues; it reads AQPNGWQYHSPSRPGSTAFPSQDG. S314, S459, S461, and S472 each carry phosphoserine. Residues 456-465 show a composition bias toward polar residues; the sequence is VPRSPSQGSY. A Phosphotyrosine modification is found at Y492. S591 is modified (phosphoserine). Positions 663–746 are disordered; sequence RKNNPSRGTD…HQTLPLDTPR (84 aa). Residues 687–711 show a composition bias toward low complexity; that stretch reads SSNSPASPLSSASLTSPLSPFSLVS. A compositionally biased stretch (polar residues) spans 712–721; that stretch reads GSQGSPTKPG. T744 bears the Phosphothreonine mark. S777 carries the phosphoserine modification. Residue T784 is modified to Phosphothreonine. The disordered stretch occupies residues 793 to 858; sequence ASGLTNGLSS…PAPDPSPRPA (66 aa). Residues 794-803 show a composition bias toward polar residues; it reads SGLTNGLSSQ. Phosphoserine is present on S801. Residues 815-827 show a composition bias toward basic and acidic residues; sequence GKVKMSVEEQIDR. The span at 828–842 shows a compositional bias: basic residues; the sequence is MRRHQSGSMREKRRS. Phosphoserine occurs at positions 848, 854, and 867. T920 is modified (phosphothreonine). Position 940 is a phosphoserine (S940). Disordered regions lie at residues 968-989 and 1005-1048; these read PIGEGDSVDVPQDSESQLQEQE and RGRM…TMRV. T1015 is modified (phosphothreonine). Residues 1016 to 1030 show a composition bias toward pro residues; that stretch reads PSPPTSPASPAPPAN. A Phosphoserine modification is found at S1017. Residue T1020 is modified to Phosphothreonine. Phosphoserine is present on residues S1021 and S1024.

As to expression, highly expressed in heart, kidney and throughout the brain.

The polypeptide is Pleckstrin homology domain-containing family A member 6 (PLEKHA6) (Homo sapiens (Human)).